A 186-amino-acid chain; its full sequence is Protein GrpE (186 aa).

The span at 1-15 shows a compositional bias: polar residues; that stretch reads MADEQQTLDQQTPEQ. Residues 1–20 form a disordered region; it reads MADEQQTLDQQTPEQPTGAA.

Belongs to the GrpE family. In terms of assembly, homodimer.

The protein localises to the cytoplasm. Participates actively in the response to hyperosmotic and heat shock by preventing the aggregation of stress-denatured proteins, in association with DnaK and GrpE. It is the nucleotide exchange factor for DnaK and may function as a thermosensor. Unfolded proteins bind initially to DnaJ; upon interaction with the DnaJ-bound protein, DnaK hydrolyzes its bound ATP, resulting in the formation of a stable complex. GrpE releases ADP from DnaK; ATP binding to DnaK triggers the release of the substrate protein, thus completing the reaction cycle. Several rounds of ATP-dependent interactions between DnaJ, DnaK and GrpE are required for fully efficient folding. The chain is Protein GrpE from Pseudomonas aeruginosa (strain UCBPP-PA14).